The following is a 348-amino-acid chain: MYRPDLLAFLLPLLAAPVFSAETLDCGKIRADGHTFDLSKLGGPHSVVTTRYKPNPAGHYNTTYTLDVCKPLKKSGGSKSECPNGTRVCAITHLLKSDGDKKEEDEVTDIVAIAGNLENAGGSRFEWTPTRLSTAESDSDKKKEGLRLVLTGGKDPLSGPSKEKTDQKAIIEFLCDPNKEGTEGEWVSEEKYEKRADEKKDDDKKEDGGDKDEGESTLEHQLKHENASLIWDGFEVEKDVGILRLTWHTKYACEKRDESGGGGSDDGGDNSSSHWGFFTWFVLIAFLLIAGYLIFSSWINFTRYGARGWDLLPHSDTIRDIPYLLKDFIRRILNTVQGTGSRGGYSAV.

The N-terminal stretch at 1–20 (MYRPDLLAFLLPLLAAPVFS) is a signal peptide. At 21–274 (AETLDCGKIR…DDGGDNSSSH (254 aa)) the chain is on the lumenal side. Positions 24 to 255 (LDCGKIRADG…TWHTKYACEK (232 aa)) constitute an MRH domain. 3 disulfide bridges follow: Cys26-Cys69, Cys82-Cys89, and Cys175-Cys253. N-linked (GlcNAc...) asparagine glycans are attached at residues Asn61 and Asn84. Residues 180 to 208 (EGTEGEWVSEEKYEKRADEKKDDDKKEDG) show a composition bias toward basic and acidic residues. Residues 180–219 (EGTEGEWVSEEKYEKRADEKKDDDKKEDGGDKDEGESTLE) form a disordered region. 2 N-linked (GlcNAc...) asparagine glycosylation sites follow: Asn226 and Asn270. A helical transmembrane segment spans residues 275–295 (WGFFTWFVLIAFLLIAGYLIF). Over 296 to 348 (SSWINFTRYGARGWDLLPHSDTIRDIPYLLKDFIRRILNTVQGTGSRGGYSAV) the chain is Cytoplasmic.

It belongs to the ATG27 family. As to quaternary structure, forms a complex with ATG9 and ATG23.

The protein resides in the cytoplasmic vesicle membrane. It is found in the golgi apparatus membrane. Its subcellular location is the mitochondrion membrane. It localises to the preautophagosomal structure membrane. In terms of biological role, effector of VPS34 phosphatidylinositol 3-phosphate kinase signaling. Regulates the cytoplasm to vacuole transport (Cvt) vesicle formation. Plays a role in ATG protein retrieval from the pre-autophagosomal structure (PAS) and is especially required for autophagy-dependent cycling of ATG9. Autophagy is required for proper vegetative growth, asexual/sexual reproduction, and full virulence. Autophagy is particularly involved in the biosynthesis of deoxynivalenol (DON), an important virulence determinant. This Gibberella zeae (strain ATCC MYA-4620 / CBS 123657 / FGSC 9075 / NRRL 31084 / PH-1) (Wheat head blight fungus) protein is Autophagy-related protein 27.